Here is a 187-residue protein sequence, read N- to C-terminus: Elongation factor P (187 aa).

It belongs to the elongation factor P family.

The protein resides in the cytoplasm. It functions in the pathway protein biosynthesis; polypeptide chain elongation. In terms of biological role, involved in peptide bond synthesis. Stimulates efficient translation and peptide-bond synthesis on native or reconstituted 70S ribosomes in vitro. Probably functions indirectly by altering the affinity of the ribosome for aminoacyl-tRNA, thus increasing their reactivity as acceptors for peptidyl transferase. In Magnetococcus marinus (strain ATCC BAA-1437 / JCM 17883 / MC-1), this protein is Elongation factor P.